The chain runs to 421 residues: NAD-specific glutamate dehydrogenase (421 aa).

The substrate site is built by K71 and K95. K107 functions as the Proton donor in the catalytic mechanism. The NAD(+) site is built by T191 and N222. A substrate-binding site is contributed by S355.

Belongs to the Glu/Leu/Phe/Val dehydrogenases family. As to quaternary structure, homohexamer.

The catalysed reaction is L-glutamate + NAD(+) + H2O = 2-oxoglutarate + NH4(+) + NADH + H(+). This chain is NAD-specific glutamate dehydrogenase (gluD), found in Clostridioides difficile (Peptoclostridium difficile).